Here is a 321-residue protein sequence, read N- to C-terminus: Basic endochitinase A (321 aa).

A signal peptide spans 1–19 (MGAFALFAVLAMAVTMAVA). The Chitin-binding type-1 domain maps to 20 to 60 (EQCGSQAGGATCPNCLCCSRFGWCGSTSDYCGDGCQSQCAG). 5 disulfides stabilise this stretch: C22–C37, C31–C43, C34–C61, C36–C50, and C54–C58. Positions 62 to 79 (GGGGTPVTPTPTPSGGGG) are hinge region (Gly/Pro/Thr-rich). Residues 80 to 321 (VSSIVSRALF…LDCYNQRPFA (242 aa)) form a catalytic region. 3 disulfide bridges follow: C101–C163, C175–C183, and C301–C314. The Proton donor role is filled by E145.

The protein belongs to the glycosyl hydrolase 19 family. Chitinase class I subfamily. In terms of tissue distribution, localized in the aleurone cells of the seed endosperm (at protein level).

It catalyses the reaction Random endo-hydrolysis of N-acetyl-beta-D-glucosaminide (1-&gt;4)-beta-linkages in chitin and chitodextrins.. In terms of biological role, defense against chitin-containing fungal pathogens. Binds the hyphal tips, lateral walls and septa of fungi and degrades mature chitin. The chain is Basic endochitinase A from Secale cereale (Rye).